Reading from the N-terminus, the 428-residue chain is Probable mitochondrial adenine nucleotide transporter BTL3 (428 aa).

Solcar repeat units follow at residues 129–212, 222–307, and 336–421; these read LNTT…YRGQ, TTNF…LKSA, and LGPM…MKVV. Helical transmembrane passes span 132-152, 187-207, 228-248, 283-303, 342-362, and 390-410; these read TKHLWAGAFAAMVSRTCIAPL, GNLVNILRTAPFKSINFYAYD, FVAGAAAGVTASLLCLPLDTI, LVPSLVSMAPSGAVFYGVYDI, LLYGAIAGACSEAATYPFEVV, and VPALYAGLIPSLLQVLPSAAI.

The protein belongs to the mitochondrial carrier (TC 2.A.29) family.

Its subcellular location is the mitochondrion inner membrane. In terms of biological role, probable mitochondrial adenylate carrier that catalyzes the transport of ATP, ADP and AMP. The protein is Probable mitochondrial adenine nucleotide transporter BTL3 of Arabidopsis thaliana (Mouse-ear cress).